The sequence spans 154 residues: Superoxide dismutase [Cu-Zn] (154 aa).

A Glycyl lysine isopeptide (Lys-Gly) (interchain with G-Cter in SUMO) cross-link involves residue Lys-19. Residues Ser-26 and Ser-39 each carry the phosphoserine modification. Residue Glu-43 participates in Zn(2+) binding. Cu cation-binding residues include His-47, His-49, and His-64. Cysteines 58 and 147 form a disulfide. His-64 serves as a coordination point for Zn(2+). Residue Lys-70 forms a Glycyl lysine isopeptide (Lys-Gly) (interchain with G-Cter in SUMO) linkage. Zn(2+)-binding residues include His-72, His-81, and Asp-84. Ser-99 and Ser-117 each carry phosphoserine. Residue His-121 coordinates Cu cation. Residues Thr-132 and Thr-138 each carry the phosphothreonine modification. Residue Arg-144 coordinates substrate.

It belongs to the Cu-Zn superoxide dismutase family. As to quaternary structure, homodimer in holo form. In apo form, heterodimer with CCS1. Zinc-binding at 'His-16' of CCS1 and Glu-43 of apo-SOD1 is required for this heterodimerization. The cofactor is Cu cation. Requires Zn(2+) as cofactor.

It localises to the cytoplasm. Its subcellular location is the mitochondrion intermembrane space. The catalysed reaction is 2 superoxide + 2 H(+) = H2O2 + O2. In terms of biological role, destroys radicals which are normally produced within the cells and which are toxic to biological systems. The polypeptide is Superoxide dismutase [Cu-Zn] (Saccharomyces cerevisiae (strain ATCC 204508 / S288c) (Baker's yeast)).